A 320-amino-acid chain; its full sequence is MKSAEYLNTFRLRNLGLPVMNNLHDMSKATRISVETLRLLIYTADFRYRIYTVEKKGPEKRMRTIYQPSRELKALQGWVLRNILDKLSSSPFSIGFEKHQSILNNATPHIGANFILNIDLEDFFPSLTANKVFGVFHSLGYNRLISSVLTKICCYKNLLPQGAPSSPKLANLICSKLDYRIQGYAGSRGLIYTRYADDLTLSAQSMKKVVKARDFLFSIIPSEGLVINSKKTCISGPRSQRKVTGLVISQEKVGIGREKYKEIRAKIHHIFCGKSSEIEHVRGWLSFILSVDSKSHRRLITYISKLEKKYGKNPLNKAKT.

The region spanning 34-248 is the Reverse transcriptase domain; it reads VETLRLLIYT…SQRKVTGLVI (215 aa). Residues Asp-119, Asp-197, and Asp-198 each coordinate Mg(2+). The segment at 230-320 is necessary and required for recognition and binding of RNA; that stretch reads KKTCISGPRS…GKNPLNKAKT (91 aa).

It belongs to the bacterial reverse transcriptase family.

It carries out the reaction DNA(n) + a 2'-deoxyribonucleoside 5'-triphosphate = DNA(n+1) + diphosphate. Reverse transcriptase (RT) component of antiviral defense system retron Ec86, composed of a non-coding RNA (ncRNA), a ribosyltransferase/DNA-binding protein and this RT. Expression of the 3-gene retron confers protection against bacteriophage T5. At multiplicity of infection (MOI) of 0.02 cultures grow normally when infected with T5 without collapsing, at MOI 2 cultures enter growth stasis. Responsible for synthesis of msDNA (a branched molecule with RNA linked by a 2',5'-phosphodiester bond to ssDNA). The retron transcript serves as primer (from a conserved internal G residue) and template for the reaction, and codes for the RT. Recognizes only its cognate RNA as a primer template. Overexpression of the ncRNA and RT (without the ribosyltransferase), which leads to increased levels of msDNA, is mutagenic in vivo. This may be due to a mismatch in the msDNA stem which binds and sequesters MutS and/or MutL. The protein is Retron Ec86 reverse transcriptase of Escherichia coli.